A 485-amino-acid chain; its full sequence is Glutamyl-tRNA(Gln) amidotransferase subunit A (485 aa).

Catalysis depends on charge relay system residues lysine 78 and serine 153. Serine 177 serves as the catalytic Acyl-ester intermediate.

Belongs to the amidase family. GatA subfamily. In terms of assembly, heterotrimer of A, B and C subunits.

It catalyses the reaction L-glutamyl-tRNA(Gln) + L-glutamine + ATP + H2O = L-glutaminyl-tRNA(Gln) + L-glutamate + ADP + phosphate + H(+). Functionally, allows the formation of correctly charged Gln-tRNA(Gln) through the transamidation of misacylated Glu-tRNA(Gln) in organisms which lack glutaminyl-tRNA synthetase. The reaction takes place in the presence of glutamine and ATP through an activated gamma-phospho-Glu-tRNA(Gln). This Geotalea daltonii (strain DSM 22248 / JCM 15807 / FRC-32) (Geobacter daltonii) protein is Glutamyl-tRNA(Gln) amidotransferase subunit A.